The sequence spans 467 residues: MNKGKIFSMLPSVDQLLNNEAIISLIGVIPRSVVVKEIRQMIEEYRKNILMLNESQIIDFEIDIEEIIRKIIKNCYNFMDMNLREVINGTGTVLHTNLGRSLLSESIKEQVWDVASGYSTLEIDVTEGKRGSRYNHVSEIIKFITGAEDALVVNNNAAAVMLVLSTMAKDKEVILSRGEMVEIGGSFRVPDVMAQSGAKLVDIGTTNKTHLKDYENAVSEDTAAFLKVHTSNYKILGFTESVEVKELVNMGRKYNIPVIEDIGSGVLIDLQKYGLSYEPTVQESVSSGVDIVTFSGDKLLGGPQAGIIVGKKLYIDQMKQNPLTRAFRVDKLTMAALEATLKLYLDEEMALQKIPTLKMLTETAESIYERAKVLHSMIVSEKLDVVAGIAKDYSEVGGGSLPLEKLSTYVIEIESKSISTSKLENRLRKYRTPIFSRVRDNKVIIDLRTIKPEQYEIIVQAFNEVIQ.

K298 carries the N6-(pyridoxal phosphate)lysine modification.

It belongs to the SelA family. Pyridoxal 5'-phosphate serves as cofactor.

The protein localises to the cytoplasm. The enzyme catalyses L-seryl-tRNA(Sec) + selenophosphate + H(+) = L-selenocysteinyl-tRNA(Sec) + phosphate. Its pathway is aminoacyl-tRNA biosynthesis; selenocysteinyl-tRNA(Sec) biosynthesis; selenocysteinyl-tRNA(Sec) from L-seryl-tRNA(Sec) (bacterial route): step 1/1. Converts seryl-tRNA(Sec) to selenocysteinyl-tRNA(Sec) required for selenoprotein biosynthesis. The sequence is that of L-seryl-tRNA(Sec) selenium transferase from Alkaliphilus oremlandii (strain OhILAs) (Clostridium oremlandii (strain OhILAs)).